Here is a 77-residue protein sequence, read N- to C-terminus: Large ribosomal subunit protein bL28 (77 aa).

The interval Met-1–Ala-21 is disordered.

It belongs to the bacterial ribosomal protein bL28 family.

This chain is Large ribosomal subunit protein bL28, found in Chromobacterium violaceum (strain ATCC 12472 / DSM 30191 / JCM 1249 / CCUG 213 / NBRC 12614 / NCIMB 9131 / NCTC 9757 / MK).